The chain runs to 156 residues: Phosphopantetheine adenylyltransferase (156 aa).

Ser9 provides a ligand contact to substrate. Residues 9–10 and His17 contribute to the ATP site; that span reads SF. Residues Lys41, Ile74, and Lys88 each contribute to the substrate site. ATP contacts are provided by residues 89–91, Glu99, and 123–129; these read GLR and LLHVSSS.

This sequence belongs to the bacterial CoaD family. As to quaternary structure, homohexamer. It depends on Mg(2+) as a cofactor.

It localises to the cytoplasm. It catalyses the reaction (R)-4'-phosphopantetheine + ATP + H(+) = 3'-dephospho-CoA + diphosphate. Its pathway is cofactor biosynthesis; coenzyme A biosynthesis; CoA from (R)-pantothenate: step 4/5. In terms of biological role, reversibly transfers an adenylyl group from ATP to 4'-phosphopantetheine, yielding dephospho-CoA (dPCoA) and pyrophosphate. This chain is Phosphopantetheine adenylyltransferase, found in Kocuria rhizophila (strain ATCC 9341 / DSM 348 / NBRC 103217 / DC2201).